Consider the following 277-residue polypeptide: Large ribosomal subunit protein uL2 (277 aa).

Disordered regions lie at residues 35 to 58 (QPLP…GGGH) and 213 to 277 (WKGI…RKRK).

Belongs to the universal ribosomal protein uL2 family. In terms of assembly, part of the 50S ribosomal subunit. Forms a bridge to the 30S subunit in the 70S ribosome.

One of the primary rRNA binding proteins. Required for association of the 30S and 50S subunits to form the 70S ribosome, for tRNA binding and peptide bond formation. It has been suggested to have peptidyltransferase activity; this is somewhat controversial. Makes several contacts with the 16S rRNA in the 70S ribosome. In Staphylococcus carnosus (strain TM300), this protein is Large ribosomal subunit protein uL2.